The following is a 377-amino-acid chain: PqqA peptide cyclase (377 aa).

The region spanning 12–228 (FGIPLAVLLE…EAARERLKGQ (217 aa)) is the Radical SAM core domain. Positions 26, 30, and 33 each coordinate [4Fe-4S] cluster.

It belongs to the radical SAM superfamily. PqqE family. In terms of assembly, interacts with PqqD. The interaction is necessary for activity of PqqE. It depends on [4Fe-4S] cluster as a cofactor.

The enzyme catalyses [PQQ precursor protein] + S-adenosyl-L-methionine = E-Y cross-linked-[PQQ precursor protein] + 5'-deoxyadenosine + L-methionine + H(+). Its pathway is cofactor biosynthesis; pyrroloquinoline quinone biosynthesis. Catalyzes the cross-linking of a glutamate residue and a tyrosine residue in the PqqA protein as part of the biosynthesis of pyrroloquinoline quinone (PQQ). In Rhodopseudomonas palustris (strain ATCC BAA-98 / CGA009), this protein is PqqA peptide cyclase.